We begin with the raw amino-acid sequence, 247 residues long: Bidirectional sugar transporter SWEET1 (247 aa).

Over 1–6 (MNIAHT) the chain is Extracellular. Residues 7–27 (IFGVFGNATALFLFLAPSITF) traverse the membrane as a helical segment. In terms of domain architecture, MtN3/slv 1 spans 7 to 94 (IFGVFGNATA…LIFLFYAPKK (88 aa)). At 28-41 (KRIIKNKSTEQFSG) the chain is on the cytoplasmic side. A helical transmembrane segment spans residues 42-62 (IPYPMTLLNCLLSAWYGLPFV). Residues 63 to 71 (SKDNTLVST) lie on the Extracellular side of the membrane. The helical transmembrane segment at 72–92 (INGTGAVIETVYVLIFLFYAP) threads the bilayer. The Cytoplasmic portion of the chain corresponds to 93–98 (KKEKIK). The chain crosses the membrane as a helical span at residues 99–119 (IFGIFSCVLAVFATVALVSLF). The Extracellular portion of the chain corresponds to 120–127 (ALQGNGRK). The helical transmembrane segment at 128–148 (LFCGLAATVFSIIMYASPLSI) threads the bilayer. Residues 130–213 (CGLAATVFSI…ILYFIYCGNK (84 aa)) form the MtN3/slv 2 domain. Over 149–162 (MRLVVKTKSVEFMP) the chain is Cytoplasmic. Residues 163 to 183 (FFLSLFVFLCGTSWFVYGLIG) form a helical membrane-spanning segment. Residues 184-187 (RDPF) lie on the Extracellular side of the membrane. Residues 188–208 (VAIPNGFGCALGTLQLILYFI) traverse the membrane as a helical segment. At 209 to 247 (YCGNKGEKSADAQKDEKSVEMKDDEKKQNVVNGKQDLQV) the chain is on the cytoplasmic side. Over residues 221-236 (QKDEKSVEMKDDEKKQ) the composition is skewed to basic and acidic residues. The disordered stretch occupies residues 221–247 (QKDEKSVEMKDDEKKQNVVNGKQDLQV). Residues 237 to 247 (NVVNGKQDLQV) show a composition bias toward polar residues.

This sequence belongs to the SWEET sugar transporter family. Forms homooligomers and heterooligomers with SWEET9, SWEET11, SWEET13, SWEET15, SWEET16 and SWEET17. In terms of tissue distribution, mainly expressed in flowers.

It is found in the cell membrane. The protein resides in the endoplasmic reticulum membrane. Functionally, mediates both low-affinity uptake and efflux of sugar across the plasma membrane. Can transport glucose, and, to a lower extent, mannose, fructose and galactose. This Arabidopsis thaliana (Mouse-ear cress) protein is Bidirectional sugar transporter SWEET1.